The sequence spans 131 residues: Peptide methionine sulfoxide reductase MsrB (131 aa).

The 123-residue stretch at 8–130 (LDTWREELTD…NSLSLKLVPR (123 aa)) folds into the MsrB domain. The Zn(2+) site is built by C47, C50, C96, and C99. The active-site Nucleophile is the C119.

The protein belongs to the MsrB Met sulfoxide reductase family. Zn(2+) serves as cofactor.

It carries out the reaction L-methionyl-[protein] + [thioredoxin]-disulfide + H2O = L-methionyl-(R)-S-oxide-[protein] + [thioredoxin]-dithiol. This chain is Peptide methionine sulfoxide reductase MsrB, found in Ectopseudomonas mendocina (strain ymp) (Pseudomonas mendocina).